Consider the following 241-residue polypeptide: Small ribosomal subunit protein uS3 (241 aa).

A KH type-2 domain is found at 22–91 (VDEYLAYKFH…NPQVTVVKVE (70 aa)). The disordered stretch occupies residues 218 to 241 (EMQQTQPEAPTLEETVEQSGGETQ).

This sequence belongs to the universal ribosomal protein uS3 family. In terms of assembly, part of the 30S ribosomal subunit.

In terms of biological role, binds the lower part of the 30S subunit head. In Ignicoccus hospitalis (strain KIN4/I / DSM 18386 / JCM 14125), this protein is Small ribosomal subunit protein uS3.